We begin with the raw amino-acid sequence, 547 residues long: Glucose-6-phosphate isomerase 1 (547 aa).

The active-site Proton donor is the Glu-353. Active-site residues include His-384 and Lys-512.

Belongs to the GPI family.

It localises to the cytoplasm. The catalysed reaction is alpha-D-glucose 6-phosphate = beta-D-fructose 6-phosphate. Its pathway is carbohydrate biosynthesis; gluconeogenesis. It functions in the pathway carbohydrate degradation; glycolysis; D-glyceraldehyde 3-phosphate and glycerone phosphate from D-glucose: step 2/4. In terms of biological role, catalyzes the reversible isomerization of glucose-6-phosphate to fructose-6-phosphate. The chain is Glucose-6-phosphate isomerase 1 from Chromobacterium violaceum (strain ATCC 12472 / DSM 30191 / JCM 1249 / CCUG 213 / NBRC 12614 / NCIMB 9131 / NCTC 9757 / MK).